We begin with the raw amino-acid sequence, 341 residues long: Holliday junction branch migration complex subunit RuvB (341 aa).

The segment at 1–182 (MKDRLISAVA…FGVISRLEYY (182 aa)) is large ATPase domain (RuvB-L). ATP-binding positions include Leu-21, Arg-22, Gly-63, Lys-66, Thr-67, Thr-68, 129–131 (EDY), Arg-172, Tyr-182, and Arg-219. Mg(2+) is bound at residue Thr-67. The small ATPAse domain (RuvB-S) stretch occupies residues 183–253 (RPEDLVLIVN…VAVEALKFLE (71 aa)). The tract at residues 256–341 (PLGLDFADRR…REETDQVSLW (86 aa)) is head domain (RuvB-H). 2 residues coordinate DNA: Arg-311 and Arg-316.

The protein belongs to the RuvB family. As to quaternary structure, homohexamer. Forms an RuvA(8)-RuvB(12)-Holliday junction (HJ) complex. HJ DNA is sandwiched between 2 RuvA tetramers; dsDNA enters through RuvA and exits via RuvB. An RuvB hexamer assembles on each DNA strand where it exits the tetramer. Each RuvB hexamer is contacted by two RuvA subunits (via domain III) on 2 adjacent RuvB subunits; this complex drives branch migration. In the full resolvosome a probable DNA-RuvA(4)-RuvB(12)-RuvC(2) complex forms which resolves the HJ.

The protein localises to the cytoplasm. The enzyme catalyses ATP + H2O = ADP + phosphate + H(+). Functionally, the RuvA-RuvB-RuvC complex processes Holliday junction (HJ) DNA during genetic recombination and DNA repair, while the RuvA-RuvB complex plays an important role in the rescue of blocked DNA replication forks via replication fork reversal (RFR). RuvA specifically binds to HJ cruciform DNA, conferring on it an open structure. The RuvB hexamer acts as an ATP-dependent pump, pulling dsDNA into and through the RuvAB complex. RuvB forms 2 homohexamers on either side of HJ DNA bound by 1 or 2 RuvA tetramers; 4 subunits per hexamer contact DNA at a time. Coordinated motions by a converter formed by DNA-disengaged RuvB subunits stimulates ATP hydrolysis and nucleotide exchange. Immobilization of the converter enables RuvB to convert the ATP-contained energy into a lever motion, pulling 2 nucleotides of DNA out of the RuvA tetramer per ATP hydrolyzed, thus driving DNA branch migration. The RuvB motors rotate together with the DNA substrate, which together with the progressing nucleotide cycle form the mechanistic basis for DNA recombination by continuous HJ branch migration. Branch migration allows RuvC to scan DNA until it finds its consensus sequence, where it cleaves and resolves cruciform DNA. The protein is Holliday junction branch migration complex subunit RuvB of Pelotomaculum thermopropionicum (strain DSM 13744 / JCM 10971 / SI).